A 143-amino-acid chain; its full sequence is Ribosome-binding factor A (143 aa).

A compositionally biased stretch (basic and acidic residues) spans 116 to 128 (SDDEAKQKQHGDQ). The segment at 116 to 143 (SDDEAKQKQHGDQQDVSQSSDDKSEGED) is disordered.

The protein belongs to the RbfA family. As to quaternary structure, monomer. Binds 30S ribosomal subunits, but not 50S ribosomal subunits or 70S ribosomes.

The protein localises to the cytoplasm. Its function is as follows. One of several proteins that assist in the late maturation steps of the functional core of the 30S ribosomal subunit. Associates with free 30S ribosomal subunits (but not with 30S subunits that are part of 70S ribosomes or polysomes). Required for efficient processing of 16S rRNA. May interact with the 5'-terminal helix region of 16S rRNA. The sequence is that of Ribosome-binding factor A from Shewanella sediminis (strain HAW-EB3).